A 527-amino-acid chain; its full sequence is uncharacterized protein (527 aa).

Disordered stretches follow at residues 1–49 (MSSF…IKDE), 99–307 (DFNF…ATTT), 319–353 (TEIN…EDEN), and 382–419 (YINN…QQQE). The segment covering 8 to 17 (YDDESEEEDN) has biased composition (acidic residues). Composition is skewed to low complexity over residues 18–44 (NNNN…NSNN) and 99–115 (DFNF…NSNN). Positions 141–150 (NEFRNPDLKN) are enriched in basic and acidic residues. 2 stretches are compositionally biased toward low complexity: residues 167-178 (SSQNTTTTQQSS) and 186-222 (NNNN…NSNN). A compositionally biased stretch (basic and acidic residues) spans 229 to 248 (DDKSKKINENENTVNKKDNI). A compositionally biased stretch (basic residues) spans 283–296 (LRKKLLKNQPKTKK). Low complexity-rich tracts occupy residues 297–307 (STTTTTTATTT) and 319–330 (TEINNNNSNSNN). The span at 386–410 (DDGDDDDDDDENENENDSQPEEEYE) shows a compositional bias: acidic residues.

This is an uncharacterized protein from Dictyostelium discoideum (Social amoeba).